The following is a 398-amino-acid chain: Acetate kinase (398 aa).

Asn9 contacts Mg(2+). Lys16 contributes to the ATP binding site. Position 93 (Arg93) interacts with substrate. Asp150 (proton donor/acceptor) is an active-site residue. Residues 209 to 213 (HLGAG), 284 to 286 (DMR), and 329 to 333 (GIGEH) each bind ATP. Position 382 (Glu382) interacts with Mg(2+).

It belongs to the acetokinase family. As to quaternary structure, homodimer. Mg(2+) is required as a cofactor. Requires Mn(2+) as cofactor.

It is found in the cytoplasm. It catalyses the reaction acetate + ATP = acetyl phosphate + ADP. The protein operates within metabolic intermediate biosynthesis; acetyl-CoA biosynthesis; acetyl-CoA from acetate: step 1/2. Functionally, catalyzes the formation of acetyl phosphate from acetate and ATP. Can also catalyze the reverse reaction. The polypeptide is Acetate kinase (Rhodopseudomonas palustris (strain TIE-1)).